Here is a 185-residue protein sequence, read N- to C-terminus: dTDP-4-dehydrorhamnose 3,5-epimerase (185 aa).

Substrate-binding positions include Arg26, Glu31, 49–51 (QDN), and Arg61. The active-site Proton acceptor is the His64. Substrate-binding residues include Lys73 and His120. The active-site Proton donor is the Tyr133. Substrate is bound by residues Asp144 and Lys171.

It belongs to the dTDP-4-dehydrorhamnose 3,5-epimerase family. In terms of assembly, homodimer.

It catalyses the reaction dTDP-4-dehydro-6-deoxy-alpha-D-glucose = dTDP-4-dehydro-beta-L-rhamnose. The protein operates within carbohydrate biosynthesis; dTDP-L-rhamnose biosynthesis. Its function is as follows. Catalyzes the epimerization of the C3' and C5'positions of dTDP-6-deoxy-D-xylo-4-hexulose, forming dTDP-6-deoxy-L-lyxo-4-hexulose. This Methanothermobacter thermautotrophicus (strain ATCC 29096 / DSM 1053 / JCM 10044 / NBRC 100330 / Delta H) (Methanobacterium thermoautotrophicum) protein is dTDP-4-dehydrorhamnose 3,5-epimerase (rmlC).